The primary structure comprises 296 residues: (+)-neomenthol dehydrogenase (296 aa).

NADP(+) is bound at residue 16–40 (RGIGFEICRQLASEGIRVVLTSRDE). Serine 164 serves as a coordination point for substrate. Residue tyrosine 220 is the Proton acceptor of the active site.

Belongs to the short-chain dehydrogenases/reductases (SDR) family. As to quaternary structure, monomer.

Its subcellular location is the cytoplasm. It catalyses the reaction (+)-neomenthol + NADP(+) = (1R,4S)-menthone + NADPH + H(+). Its function is as follows. Aldehyde reductase that catalyzes the reduction of the aldehyde carbonyl groups on saturated and alpha,beta-unsaturated aldehydes with more than 5 carbons. Involved in basal resistance against pathogens. This Arabidopsis thaliana (Mouse-ear cress) protein is (+)-neomenthol dehydrogenase (SDR1).